The primary structure comprises 86 residues: Small ribosomal subunit protein bS20 (86 aa).

Positions methionine 1 to asparagine 11 are enriched in basic residues. The disordered stretch occupies residues methionine 1 to glutamine 20.

This sequence belongs to the bacterial ribosomal protein bS20 family.

Binds directly to 16S ribosomal RNA. The sequence is that of Small ribosomal subunit protein bS20 from Aster yellows witches'-broom phytoplasma (strain AYWB).